The chain runs to 957 residues: Serine-aspartate repeat-containing protein C (957 aa).

The first 50 residues, 1–50, serve as a signal peptide directing secretion; sequence MNNKKTVTNRKGMIPNRLNKFSIRKYSVGTASILVGTTLIFGLSGHEAKA. Positions 51–166 are disordered; sequence AEHTNGELNQ…TPKTTTIKPR (116 aa). Residues 51 to 495 form a ligand binding A region region; it reads AEHTNGELNQ…GSSTANGDQK (445 aa). Residues 56-71 are compositionally biased toward polar residues; the sequence is GELNQSKNETTAPSEN. Residues 72 to 83 show a composition bias toward basic and acidic residues; that stretch reads KTTEKVDSRQLK. Polar residues predominate over residues 84-114; it reads DNTQTATADQPKVTMSDSATVKETSSNMQSP. Positions 115 to 132 are enriched in low complexity; sequence QNATASQSTTQTSNVTTN. The span at 133–164 shows a compositional bias: polar residues; it reads DKSSTTYSNETDKSNLTQAKDVSATPKTTTIK. 2 consecutive CNA-B domains span residues 496–606 and 607–717; these read KYNL…YKTP and KYSL…EEET. Residues 678 to 937 form a disordered region; that stretch reads TQTGTNTTED…NNSNNGTLFG (260 aa). Composition is skewed to acidic residues over residues 685-695 and 712-896; these read TEDDKDADGGE and YYEE…DSDS. Positions 920 to 924 match the LPXTG sorting signal motif; it reads LPETG. Residues 922-937 are compositionally biased toward low complexity; the sequence is ETGSENNNSNNGTLFG. Thr-923 is subject to Pentaglycyl murein peptidoglycan amidated threonine. Positions 924 to 957 are cleaved as a propeptide — removed by sortase; that stretch reads GSENNNSNNGTLFGGLFAALGSLLLFGRRKKQNK.

The protein belongs to the serine-aspartate repeat-containing protein (SDr) family. Homodimerizes; via N2-Domain. Interacts with host NRXN1; this interaction mediates bacterial attachment to host cells.

The protein resides in the secreted. Its subcellular location is the cell wall. Functionally, cell surface-associated calcium-binding protein which plays an important role in adhesion and pathogenesis. Mediates interactions with components of the extracellular matrix such as host NRXN1 to promote bacterial adhesion. The protein is Serine-aspartate repeat-containing protein C (sdrC) of Staphylococcus aureus (strain MSSA476).